Here is a 747-residue protein sequence, read N- to C-terminus: Anoctamin-9 (747 aa).

Residues 1–193 (MQDDESSQIF…LYFTWLGWYT (193 aa)) are Cytoplasmic-facing. The helical transmembrane segment at 194–214 (YMLVPAAVVGLIVFLSGFALF) threads the bilayer. The Extracellular portion of the chain corresponds to 215–259 (DSSQISKEICSANDIFMCPLGDHSHRYLRLSEMCTFAKLTHLFDN). Residue S245 is modified to Phosphoserine; by PKA. A helical transmembrane segment spans residues 260–280 (EGTVLFAIFMALWATVFLEIW). The Cytoplasmic segment spans residues 281 to 326 (KRKRAHEVQSWKLYEWDEEEEEMALELINSPHYKLKDHRHSYLSST). Residues 327 to 347 (IILILSLFMICLMIGMAHVLV) form a helical membrane-spanning segment. The Extracellular segment spans residues 348–364 (VYRVLAGALFSSLVKQQ). Residues 365 to 385 (VTTAVVVTGAVVHYIIIVIMT) traverse the membrane as a helical segment. The Cytoplasmic portion of the chain corresponds to 386–414 (KVNKYVALKLCKFEESGTFSEQERKFTVK). A helical transmembrane segment spans residues 415 to 435 (FFILQFFAHFSSLIYIAFILG). Residues 436–543 (RINGHPGKST…EMMIQYGFTT (108 aa)) are Extracellular-facing. The chain crosses the membrane as a helical span at residues 544–564 (IFVAAFPLAPLLALFSNLVEI). The Cytoplasmic portion of the chain corresponds to 565–595 (RLDAIKMVRLQRRLVPRKAKDIGTWLQVLET). The chain crosses the membrane as a helical span at residues 596–616 (IGVLAVIANGMVIAFTSEFIP). The Extracellular segment spans residues 617 to 695 (RVVYKYHYGP…FWFILAIRLT (79 aa)). N-linked (GlcNAc...) asparagine glycans are attached at residues N630, N643, N665, and N681. The chain crosses the membrane as a helical span at residues 696 to 716 (FVILFEHFALCIKLIAAWFVP). Topologically, residues 717–747 (DVPQKVKNEVLQEKYDRIRHRMRFSSRSTDV) are cytoplasmic.

It belongs to the anoctamin family. Phosphorylation on Ser-245 by cAMP-dependent protein kinase A (PKA)is essential for activation of its cation channel activity. In terms of tissue distribution, highly expressed in the olfactory epithelium, particularly in mature olfactory sensory neurons (at protein level). Expressed in the kidney (at protein level). Predominant expression seen in epithelial tissues. Highly expressed in the small intestine, colon and stomach.

It is found in the cell membrane. The protein resides in the endoplasmic reticulum. The catalysed reaction is a 1,2-diacyl-sn-glycero-3-phospho-L-serine(in) = a 1,2-diacyl-sn-glycero-3-phospho-L-serine(out). The enzyme catalyses a beta-D-galactosyl-(1&lt;-&gt;1')-N-acylsphing-4-enine(out) = a beta-D-galactosyl-(1&lt;-&gt;1')-N-acylsphing-4-enine(in). It catalyses the reaction a 1,2-diacyl-sn-glycero-3-phosphocholine(in) = a 1,2-diacyl-sn-glycero-3-phosphocholine(out). It carries out the reaction Ca(2+)(in) = Ca(2+)(out). The catalysed reaction is Na(+)(in) = Na(+)(out). The enzyme catalyses K(+)(in) = K(+)(out). Its activity is regulated as follows. Cation channel activity is activated via phosphorylation on Ser-245 by cAMP-dependent protein kinase A (PKA). Inhibited by NaCl. PKA-activated nonselective cation channel. Discriminates poorly among cations but is more permeable to Ca(2+) ions than to monovalent cations. Acts as a calcium-activated calcium permeable channel which may operate as a endoplasmic reticulum (ER) Ca(2+)-leak channel, reducing the loading of the ER Ca(2+) store. Regulates intracellular Ca2+ signals, ion channel activity, and cytokine release in the renal tissue. Plays an important role in olfaction, amplifying cAMP-evoked cyclic nucleotide-gated (CNG) channel currents in the olfactory sensory neurons. Has calcium-dependent phospholipid scramblase activity; scrambles phosphatidylserine, phosphatidylcholine and galactosylceramide. Does not exhibit calcium-activated chloride channel (CaCC) activity. Can inhibit the activity of ANO1. The chain is Anoctamin-9 from Mus musculus (Mouse).